Here is a 150-residue protein sequence, read N- to C-terminus: PQSGTALDENVKEEIRAFKMDQSKVKVPWMLLEIVQNDDRIDVVKVTKKAGPSDNLETLREELKQREVVYFVLDYEPSEEKRAKHNIPKGKTYPLTCFWSMETANIKLKMKYSSTVGTLKSATSTLKTYLEAHDFDDLSEEAIGDKIKNF.

An ADF-H domain is found at 3-148 (SGTALDENVK…SEEAIGDKIK (146 aa)).

This sequence belongs to the actin-binding proteins ADF family.

Depactin interacts with actin at some of its 12 N-terminal residues and 20 C-terminal residues. Binds to actin monomers from filaments and in solution. In Asterias amurensis (Northern Pacific seastar), this protein is Depactin.